The following is a 345-amino-acid chain: 4-hydroxyproline 2-epimerase (345 aa).

Glutamine 85 is a binding site for substrate. Serine 93 (proton acceptor) is an active-site residue. Residues 94–95 and aspartate 251 each bind substrate; that span reads GS. Cysteine 255 serves as the catalytic Proton donor. 256–257 lines the substrate pocket; sequence GT.

It belongs to the proline racemase family.

It carries out the reaction trans-4-hydroxy-L-proline = cis-4-hydroxy-D-proline. Catalyzes the epimerization of trans-4-hydroxy-L-proline (t4LHyp) to cis-4-hydroxy-D-proline (c4DHyp). May be involved in a degradation pathway of t4LHyp, which would allow A.tumefaciens to grow on t4LHyp as a sole carbon source. Can also catalyze the epimerization of trans-3-hydroxy-L-proline (t3LHyp) to cis-3-hydroxy-D-proline (c3DHyp) in vitro. Displays no proline racemase activity. This Agrobacterium fabrum (strain C58 / ATCC 33970) (Agrobacterium tumefaciens (strain C58)) protein is 4-hydroxyproline 2-epimerase.